The chain runs to 374 residues: MSRVPSPPPPAEMSSGPVAESWCYTQIKVVKFSYMWTINNFSFCREEMGEVIKSSTFSSGANDKLKWCLRVNPKGLDEESKDYLSLYLLLVSCPKSEVRAKFKFSILNAKGEETKAMESQRAYRFVQGKDWGFKKFIRRDFLLDEANGLLPDDKLTLFCEVSVVQDSVNISGQNTMNMVKVPECRLADELGGLWENSRFTDCCLCVAGQEFQAHKAILAARSPVFSAMFEHEMEESKKNRVEINDVEPEVFKEMMCFIYTGKAPNLDKMADDLLAAADKYALERLKVMCEDALCSNLSVENAAEILILADLHSADQLKTQAVDFINYHASDVLETSGWKSMVVSHPHLVAEAYRSLASAQCPFLGPPRKRLKQS.

The region spanning 31–161 is the MATH domain; the sequence is KFSYMWTINN…DDKLTLFCEV (131 aa). The segment at 71 to 191 is required for nuclear localization; it reads VNPKGLDEES…PECRLADELG (121 aa). The segment at 123–133 is important for binding substrate proteins; it reads YRFVQGKDWGF. One can recognise a BTB domain in the interval 173-297; the sequence is QNTMNMVKVP…MCEDALCSNL (125 aa). Important for homodimerization stretches follow at residues 186-217 and 297-355; these read LADELGGLWENSRFTDCCLCVAGQEFQAHKAI and LSVE…AYRS.

It belongs to the Tdpoz family. As to quaternary structure, interacts with GLI2 and GLI3. Homodimer and homooligomer. Heterodimer with SPOPL. Each dimer interacts with two CUL3 molecules. Part of cullin-RING-based BCR (BTB-CUL3-RBX1) E3 ubiquitin-protein ligase complexes that contain CUL3 and homodimeric SPOP, or the heterodimer formed by SPOP and SPOPL, plus a target protein, such as MACROH2A1, PDX1/IPF1, BMI1, BRMS1 and DAXX. Interacts with IRF1; this interaction mediates IRF1 proteasomal degradation. Interacts with HNF1A.

The protein localises to the nucleus. The protein resides in the nucleus speckle. The protein operates within protein modification; protein ubiquitination. Component of a cullin-RING-based BCR (BTB-CUL3-RBX1) E3 ubiquitin-protein ligase complex that mediates the ubiquitination of target proteins, leading most often to their proteasomal degradation. In complex with CUL3, involved in ubiquitination and proteasomal degradation of BRMS1, DAXX, PDX1/IPF1, GLI2 and GLI3. In complex with CUL3, involved in ubiquitination of MACROH2A1 and BMI1; this does not lead to their proteasomal degradation. Inhibits transcriptional activation of PDX1/IPF1 targets, such as insulin, by promoting PDX1/IPF1 degradation. The cullin-RING-based BCR (BTB-CUL3-RBX1) E3 ubiquitin-protein ligase complex containing homodimeric SPOP has higher ubiquitin ligase activity than the complex that contains the heterodimer formed by SPOP and SPOPL. Involved in the regulation of bromodomain and extra-terminal motif (BET) proteins BRD2, BRD3, BRD4 stability.Plays an essential role for proper translation, but not for their degradation, of critical DNA replication licensing factors CDT1 and CDC6, thereby participating in DNA synthesis and cell proliferation. Regulates interferon regulatory factor 1/IRF1 proteasomal turnover by targeting S/T-rich degrons in IRF1. Involved in ubiquitination of BRDT and promotes its degradation, thereby regulates histone removal in early condensing spermatids prior to histone-to-protamine exchange. The protein is Speckle-type POZ protein (SPOP) of Bos taurus (Bovine).